Consider the following 211-residue polypeptide: Pyrrolidone-carboxylate peptidase 1 (211 aa).

Residues Glu79, Cys142, and His164 contribute to the active site.

Belongs to the peptidase C15 family. As to quaternary structure, homotetramer.

It is found in the cytoplasm. The enzyme catalyses Release of an N-terminal pyroglutamyl group from a polypeptide, the second amino acid generally not being Pro.. Functionally, removes 5-oxoproline from various penultimate amino acid residues except L-proline. The protein is Pyrrolidone-carboxylate peptidase 1 (pcp1) of Saccharolobus solfataricus (strain ATCC 35092 / DSM 1617 / JCM 11322 / P2) (Sulfolobus solfataricus).